The chain runs to 732 residues: Probable boron transporter 3 (732 aa).

Met1 carries the post-translational modification N-acetylmethionine. The Cytoplasmic portion of the chain corresponds to 1 to 37; the sequence is MDEAESFVPFQGIKKDVKGRLNCYKQDWISGLRAGFR. A helical transmembrane segment spans residues 38-58; that stretch reads ILAPTTYIFFASAIPVITFGE. Over 59 to 77 the chain is Extracellular; sequence QLERDTDGKITAVQTLVST. The helical transmembrane segment at 78–98 threads the bilayer; the sequence is ALCGVIHSIIGGQPLLILGVA. Residues 99–123 lie on the Cytoplasmic side of the membrane; sequence EPTVIMYTFMFNFAKSRTDLGSNLF. The chain crosses the membrane as a helical span at residues 124-144; that stretch reads LAWTGWVCLWTGLLLFLLAVL. Residues 145–157 are Extracellular-facing; sequence GACTFINRFTRLA. Residues 158–178 form a helical membrane-spanning segment; sequence GELFGILIAMLFMQEAIRGIV. Over 179 to 197 the chain is Cytoplasmic; the sequence is DEFGVPGRTNPRSAEFQPA. A helical transmembrane segment spans residues 198–218; sequence WVFANGMFGLVLSSGLLYTGL. Residues 219–234 are Extracellular-facing; sequence KSRKARSWRFGAEWLR. The helical transmembrane segment at 235–255 threads the bilayer; the sequence is GFIADYGVPVMVVVWTCISYI. The Cytoplasmic portion of the chain corresponds to 256–291; that stretch reads PWKSVPQGIPRRLVSPNPWSPGAYQNWTVIKEMVDV. The chain crosses the membrane as a helical span at residues 292-312; it reads PVLYILLAVVPASMIAVLYYF. Over 313-339 the chain is Extracellular; sequence DHSVASQLAQQEDFNLRKPPAYHYDLF. The helical transmembrane segment at 340–360 threads the bilayer; that stretch reads LLGFLTILCGLIGIPPSNGVI. At 361 to 463 the chain is on the cytoplasmic side; it reads PQSPMHTKSL…ILPVEVKEQR (103 aa). The chain crosses the membrane as a helical span at residues 464 to 484; it reads VSNFLQAMMVAGCVAAMPLIK. The Extracellular segment spans residues 485 to 556; that stretch reads RIPSSVLWGY…LFQTAYLLVC (72 aa). A helical membrane pass occupies residues 557–577; the sequence is FGITWVPVAGVLFPLMIMFLV. Topologically, residues 578 to 732 are cytoplasmic; that stretch reads PVRQYVLPNF…QRLSNLGKSV (155 aa). Residues 695 to 732 are disordered; sequence GGGEISPRSSAGRAPFSPRSATGGGGGEQRLSNLGKSV.

The protein belongs to the anion exchanger (TC 2.A.31.3) family.

It is found in the membrane. Functionally, probable boron transporter. Boron is essential for maintaining the integrity of plants cell walls. The chain is Probable boron transporter 3 (BOR3) from Arabidopsis thaliana (Mouse-ear cress).